The sequence spans 220 residues: Ribose-5-phosphate isomerase A (220 aa).

Residues 25-28, 80-83, and 93-96 each bind substrate; these read TGST, DGAD, and KGGG. The active-site Proton acceptor is E102. Residue K120 coordinates substrate.

The protein belongs to the ribose 5-phosphate isomerase family. As to quaternary structure, homodimer.

The enzyme catalyses aldehydo-D-ribose 5-phosphate = D-ribulose 5-phosphate. Its pathway is carbohydrate degradation; pentose phosphate pathway; D-ribose 5-phosphate from D-ribulose 5-phosphate (non-oxidative stage): step 1/1. Its function is as follows. Catalyzes the reversible conversion of ribose-5-phosphate to ribulose 5-phosphate. The sequence is that of Ribose-5-phosphate isomerase A from Bacillus cereus (strain ATCC 14579 / DSM 31 / CCUG 7414 / JCM 2152 / NBRC 15305 / NCIMB 9373 / NCTC 2599 / NRRL B-3711).